A 404-amino-acid polypeptide reads, in one-letter code: Deoxyguanosinetriphosphate triphosphohydrolase-like protein (404 aa).

Residues 1-32 form a disordered region; sequence MAVGMAAPHATYASDPARSRGRLFDEPPSKTR. Positions 22–32 are enriched in basic and acidic residues; it reads RLFDEPPSKTR. Residues 69-217 form the HD domain; it reads RLTHTLEVAQ…AAIADDIAYD (149 aa).

This sequence belongs to the dGTPase family. Type 2 subfamily.

This chain is Deoxyguanosinetriphosphate triphosphohydrolase-like protein, found in Nitrobacter hamburgensis (strain DSM 10229 / NCIMB 13809 / X14).